A 279-amino-acid chain; its full sequence is Tumor necrosis factor ligand superfamily member 6 (279 aa).

The Cytoplasmic portion of the chain corresponds to 1–78; it reads MQQPMNYPCP…PLKKKDHNTN (78 aa). The interval 30 to 70 is disordered; that stretch reads FPCPSCGPRGPDQRRPPPPPPPVSPLPPPSQPLPLPPLTPL. The segment covering 45–68 has biased composition (pro residues); sequence PPPPPPPVSPLPPPSQPLPLPPLT. A helical; Signal-anchor for type II membrane protein membrane pass occupies residues 79–100; that stretch reads LWLPVVFFMVLVALVGMGLGMY. At 101-279 the chain is on the extracellular side; it reads QLFHLQKELA…SKTFFGLYKL (179 aa). N-linked (GlcNAc...) asparagine glycosylation occurs at asparagine 117. The span at 126 to 135 shows a compositional bias: polar residues; the sequence is EKQIANPSTP. The tract at residues 126-150 is disordered; that stretch reads EKQIANPSTPSEKKEPRSVAHLTGN. A THD domain is found at 143–279; sequence SVAHLTGNPH…SKTFFGLYKL (137 aa). Asparagine 182 is a glycosylation site (N-linked (GlcNAc...) asparagine). Cysteine 200 and cysteine 231 are disulfide-bonded. 2 N-linked (GlcNAc...) asparagine glycosylation sites follow: asparagine 248 and asparagine 258.

This sequence belongs to the tumor necrosis factor family. In terms of assembly, homotrimer. Interacts with ARHGAP9, BAIAP2L1, BTK, CACNB3, CACNB4, CRK, DLG2, DNMBP, DOCK4, EPS8L3, FGR, FYB1, FYN, HCK, ITK, ITSN2, KALRN, LYN, MACC1, MIA, MPP4, MYO15A, NCF1, NCK1, NCK2, NCKIPSD, OSTF1, PIK3R1, PSTPIP1, RIMBP3C, SAMSN1, SH3GL3, SH3PXD2B, SH3PXD2A, SH3RF2, SKAP2, SNX33, SNX9, SORBS3, SPTA1, SRC, SRGAP1, SRGAP2, SRGAP3, TEC, TJP3 and YES1. Post-translationally, the soluble form derives from the membrane form by proteolytic processing. The membrane-bound form undergoes two successive intramembrane proteolytic cleavages. The first one is processed by ADAM10 producing an N-terminal fragment, which lacks the receptor-binding extracellular domain. This ADAM10-processed FasL (FAsL APL) remnant form is still membrane anchored and further processed by SPPL2A that liberates the FasL intracellular domain (FasL ICD). FasL shedding by ADAM10 is a prerequisite for subsequent intramembrane cleavage by SPPL2A in T-cells. Phosphorylated by FGR on tyrosine residues; this is required for ubiquitination and subsequent internalization. In terms of processing, N-glycosylated. Glycosylation enhances apoptotic activity. Post-translationally, monoubiquitinated. Expressed in T-cells. Expressed in natural killer cells.

Its subcellular location is the cell membrane. It is found in the cytoplasmic vesicle lumen. The protein localises to the lysosome lumen. It localises to the secreted. The protein resides in the nucleus. Cytokine that binds to TNFRSF6/FAS, a receptor that transduces the apoptotic signal into cells. Involved in cytotoxic T-cell-mediated apoptosis, natural killer cell-mediated apoptosis and in T-cell development. Initiates fratricidal/suicidal activation-induced cell death (AICD) in antigen-activated T-cells contributing to the termination of immune responses. TNFRSF6/FAS-mediated apoptosis also has a role in the induction of peripheral tolerance. Binds to TNFRSF6B/DcR3, a decoy receptor that blocks apoptosis. Functionally, induces FAS-mediated activation of NF-kappa-B, initiating non-apoptotic signaling pathways. Can induce apoptosis but does not appear to be essential for this process. Its function is as follows. Cytoplasmic form induces gene transcription inhibition. This is Tumor necrosis factor ligand superfamily member 6 (Faslg) from Mus musculus (Mouse).